Here is a 778-residue protein sequence, read N- to C-terminus: Endonuclease MutS2 (778 aa).

Residue 328-335 participates in ATP binding; that stretch reads GPNTGGKT. The 76-residue stretch at 702–777 folds into the Smr domain; the sequence is LDLRGKRYEE…GSGATIVTFK (76 aa).

This sequence belongs to the DNA mismatch repair MutS family. MutS2 subfamily. Homodimer. Binds to stalled ribosomes, contacting rRNA.

Endonuclease that is involved in the suppression of homologous recombination and thus may have a key role in the control of bacterial genetic diversity. Its function is as follows. Acts as a ribosome collision sensor, splitting the ribosome into its 2 subunits. Detects stalled/collided 70S ribosomes which it binds and splits by an ATP-hydrolysis driven conformational change. Acts upstream of the ribosome quality control system (RQC), a ribosome-associated complex that mediates the extraction of incompletely synthesized nascent chains from stalled ribosomes and their subsequent degradation. Probably generates substrates for RQC. This chain is Endonuclease MutS2, found in Streptococcus pneumoniae (strain JJA).